A 240-amino-acid chain; its full sequence is Ubiquinone biosynthesis O-methyltransferase (240 aa).

Arginine 44, glycine 64, aspartate 85, and methionine 129 together coordinate S-adenosyl-L-methionine.

It belongs to the methyltransferase superfamily. UbiG/COQ3 family.

The catalysed reaction is a 3-demethylubiquinol + S-adenosyl-L-methionine = a ubiquinol + S-adenosyl-L-homocysteine + H(+). The enzyme catalyses a 3-(all-trans-polyprenyl)benzene-1,2-diol + S-adenosyl-L-methionine = a 2-methoxy-6-(all-trans-polyprenyl)phenol + S-adenosyl-L-homocysteine + H(+). Its pathway is cofactor biosynthesis; ubiquinone biosynthesis. In terms of biological role, O-methyltransferase that catalyzes the 2 O-methylation steps in the ubiquinone biosynthetic pathway. This is Ubiquinone biosynthesis O-methyltransferase from Escherichia coli O6:K15:H31 (strain 536 / UPEC).